The following is a 216-amino-acid chain: uncharacterized protein (216 aa).

A helical transmembrane segment spans residues 5 to 22 (LGLVFGSVILIYLISLFL).

It localises to the membrane. This is an uncharacterized protein from Aquifex aeolicus (strain VF5).